Here is a 1848-residue protein sequence, read N- to C-terminus: MAGVWQHPFVNVFKHLRLEEWKKSSKEGDVTSVMDKTLKCTVYRIRGSIPAGNYIQLPKTSSQSLGLTGRYLYILFKPLPGKHFVVHIDVSAEDGQTVRISFSNLFKEFKSTATWLQFPFVCGAIKGSVYDSTAQGARQGMVGPAPSGSRWTCLLLDVQYILSLYLSRRYSHLRSAKLCSNLLVRNLMTSDLLFNPEVNFMEARHAKTLPDGISPMPREMSFPVPKGEKWHDLYDFIMFPSDSSKLPYDSIQKGQSMVTAPGAPMSRSPARERPRSVTISKPVQDRVSLIQQITTPRPMPHRSLLRVESVPERPVSVSARAEEARDLEDRSRGVEQDGGVHVYAHKTNKLSIHRHKSDSEQVICTKVDRPETLSVPPECKKLLPDPIFNLRRIIGFGGCTECFALWTHTGCSVVYPCHAIIVVLEVKTGEQRFLLGHTDKVSALAFNGSCTLLASAQTGSLSMVRLWHFQKGSCLAMFKTHVHSVSYLSFSHSGTVLCGVGKDGHGKTMVVVWNTSQASRSGEVAVLAKAHTDIDIQTMKIAFFDDTRMVSCGKDNVRLWRVRGGTLRSCPVNLGEYHMLEFSDLAFEAGHRPEKEAEDRTLYVSSRSGHILEIDYKNVVLRNVRRVQPGQQQHSERRDKQTFSSGPGIAINSLSVSATFCATGTEDGYLRLWPLDFSGVFLEAEHEGPVSCVAISPEGLRVLSCTSSGELGVLDVPSRGYNTLMRSHTDTLLSFSCHPTHPQLVTVSSDNTIRIWDTGTLQQLYDFTAEEETPCAVTFHPVRQAFACGFSSGTIRFFDITATALQAEHKQHRGAITGLLFSPDGSLMYSCCSLGSVALYSIGHKEQHVLRVLGNVVCKDSERGPMALSLSSDGRLLAFVGPTEYTVTVMDARSLDELLRVDVSILDLDSTTLDCALGLAFSPLKPHHLLVSTSGNKILWLDPKTGRLTREVTQVHKQCCSSLAVSMDTRYMLTAGDRLLKVWDQRQPGTVRPQVFIGHSEAVQQVDFSPDQQSVISAGDAVFIWDFLAAPDPEFTKTDCVPALPFALHSSAALDPSSEHRRDSTFISSGMPRGTAPRPCISSPPRLDISPVQGMDHPDLFSESDDGQEEEGNRDEQERTLVPDTRDNLVESDEQSSVVIIECQPNRAKLLTGSKSNSSSLREGMVKSTHEPPRPDSYTHFHTRFKASCLAKGMCHPPEGQEMLTLRALIGYNGNGRANMAWNPDTGFFSYTCGCVIVVEDLHSGSQRHWLGHPEEISTLALTNDALVLASASGSGDGSSLCQIRIWDTQDGSCMKILTHHRTEVQAMSYSRDDRLFVSIGDYRDGNLALWSTKGYELLATSRLFQPVHAVTFNPAHFDDFASAGPGAVSFWRIETQGTDTQIKVYRVAVPEEVGTAAELTSITYNSTSLLYSGCSTGQVCVWDCQTHRCFLTWEADQGEIGILLCRGNRLLTGSNTRRIRLWCVAAVQELREKGSGASSTSVLMEHEMTLDGAIVSATFDDALEMGIVGTTAGTLWYINWVENTSIRLISGHRNKVMDLAVAHGESHCATCGEDGSLRIWSLQSCELLLQFQVLNQSCLCLAWSPQPKSGPSTEDQRIAAGYSDGTIRIFSVSKTEMEMKIHPHPCAVTSIAYSTSGDVLLTGGKDGQMAITSPRTGMTIRVLSDHKGSPITTIECTGRKLTGLPTDGELWLAASTDRRVSIWASDWSKDKCELLDWLSFPAPTSQKDLDVSVPTLAAFCPWQPGTVVYSGFGVEKEILFYSLIQKQVLLRIPLSHFATSLTLSPAASLIAVGSNERLLRLIDTSAGTKQDFAAYDDGVHLCRVSPSGNLLLTASYNQVLVWDIQNS.

The binds with microtubules stretch occupies residues 1 to 222 (MAGVWQHPFV…ISPMPREMSF (222 aa)). Disordered stretches follow at residues 257–278 (MVTAPGAPMSRSPARERPRSVT) and 316–336 (SVSARAEEARDLEDRSRGVEQ). Basic and acidic residues predominate over residues 320–335 (RAEEARDLEDRSRGVE). WD repeat units lie at residues 436–479 (GHTD…AMFK), 481–523 (HVHS…RSGE), 530–570 (AHTD…LRSC), 644–683 (SSGPGIAINSLSVSATFCATGTEDGYLRLWPLDFSGVFLE), 685–724 (EHEGPVSCVAISPEGLRVLSCTSSGELGVLDVPSRGYNTL), 727–766 (SHTDTLLSFSCHPTHPQLVTVSSDNTIRIWDTGTLQQLYD), 769–808 (AEEETPCAVTFHPVRQAFACGFSSGTIRFFDITATALQAE), 811–850 (QHRGAITGLLFSPDGSLMYSCCSLGSVALYSIGHKEQHVL), 955–993 (VHKQCCSSLAVSMDTRYMLTAGDRLLKVWDQRQPGTVRP), and 998–1035 (GHSEAVQQVDFSPDQQSVISAGDAVFIWDFLAAPDPEF). Disordered stretches follow at residues 1053–1133 (ALDP…VESD) and 1151–1178 (LTGSKSNSSSLREGMVKSTHEPPRPDSY). Residues 1102-1113 (SESDDGQEEEGN) show a composition bias toward acidic residues. Composition is skewed to basic and acidic residues over residues 1114–1129 (RDEQERTLVPDTRDNL) and 1164–1178 (GMVKSTHEPPRPDSY). WD repeat units follow at residues 1252-1297 (GHPE…CMKI), 1300-1341 (HHRT…LLAT), 1343-1382 (RLFQPVHAVTFNPAHFDDFASAGPGAVSFWRIETQGTDTQ), 1395-1433 (GTAAELTSITYNSTSLLYSGCSTGQVCVWDCQTHRCFLT), 1435-1473 (EADQGEIGILLCRGNRLLTGSNTRRIRLWCVAAVQELRE), 1532-1571 (GHRNKVMDLAVAHGESHCATCGEDGSLRIWSLQSCELLLQ), 1574-1621 (VLNQ…MEMK), 1624-1663 (PHPCAVTSIAYSTSGDVLLTGGKDGQMAITSPRTGMTIRV), 1670-1714 (SPIT…DKCE), 1774-1813 (PLSHFATSLTLSPAASLIAVGSNERLLRLIDTSAGTKQDF), and 1815-1848 (AYDDGVHLCRVSPSGNLLLTASYNQVLVWDIQNS).

This sequence belongs to the WD repeat WDR90/POC16 family.

It localises to the cytoplasm. The protein resides in the cytoskeleton. Its subcellular location is the microtubule organizing center. The protein localises to the centrosome. It is found in the centriole. It localises to the centriolar satellite. Microtubule-binding protein that plays a crucial role in ensuring inner core protein localization within the centriole core, as well as in maintaining the microtubule wall integrity and the overall centriole roundness and stability. Required for efficient primary cilium formation. This is WD repeat-containing protein 90 (wdr90) from Xenopus tropicalis (Western clawed frog).